Consider the following 66-residue polypeptide: uncharacterized protein (66 aa).

A disordered region spans residues 1 to 21 (MPGGDRTGPWGQGPRTGRRAG).

This is an uncharacterized protein from Archaeoglobus fulgidus (strain ATCC 49558 / DSM 4304 / JCM 9628 / NBRC 100126 / VC-16).